We begin with the raw amino-acid sequence, 305 residues long: Syntaxin-123 (305 aa).

Methionine 1 bears the N-acetylmethionine mark. The Cytoplasmic segment spans residues 1–278 (MNDLISSSFK…KVLQRNNRKW (278 aa)). A coiled-coil region spans residues 46–66 (VKEDMKAVDEIHKRLQDANEE). A t-SNARE coiled-coil homology domain is found at 206-268 (LSEIQERHDT…MRGTDQLHGA (63 aa)). The helical; Anchor for type IV membrane protein transmembrane segment at 279 to 299 (ACIATILAIVVVIVILFPILF) threads the bilayer. At 300-305 (NTLLRP) the chain is on the vesicular side.

The protein belongs to the syntaxin family. Part of the t-SNARE complex. Expressed in tips of root hairs.

The protein resides in the membrane. Vesicle trafficking protein that functions in the secretory pathway. Acts in coordination with SYP132 to mediate tip-focused membrane trafficking for root hair tip growth. Functions in root hair elongation by forming SNARE complexes with VAMP721,VAMP722 or VAMP724. The protein is Syntaxin-123 of Arabidopsis thaliana (Mouse-ear cress).